Consider the following 547-residue polypeptide: Chorismate synthase (547 aa).

Residues His17, His104, and Asp500 contribute to the active site.

It belongs to the chorismate synthase family.

It is found in the cytoplasm. The protein localises to the cytosol. It carries out the reaction 5-O-(1-carboxyvinyl)-3-phosphoshikimate = chorismate + phosphate. It catalyses the reaction FMNH2 + NADP(+) = FMN + NADPH + 2 H(+). Its pathway is metabolic intermediate biosynthesis; chorismate biosynthesis; chorismate from D-erythrose 4-phosphate and phosphoenolpyruvate: step 7/7. In terms of biological role, bifunctional chorismate synthase and flavin reductase. Catalyzes the conversion of 5-enolpyruvylshikimate 3-phosphate (EPSP) to form chorismate. Acts also as a flavin reductase (FR) able to generate reduced flavin mononucleotide in the presence of NADPH. The chain is Chorismate synthase from Plasmodium vivax (strain Salvador I).